Here is a 1677-residue protein sequence, read N- to C-terminus: Pentafunctional AROM polypeptide (1677 aa).

Residues 1–394 (MAVADDTKAD…YEQKASIVED (394 aa)) are 3-dehydroquinate synthase. NAD(+) is bound by residues 50 to 52 (DDN), 89 to 92 (ETSK), 120 to 122 (GGV), and Asp-125. Residue Arg-136 coordinates 7-phospho-2-dehydro-3-deoxy-D-arabino-heptonate. An NAD(+)-binding site is contributed by 145-146 (TT). The 7-phospho-2-dehydro-3-deoxy-D-arabino-heptonate site is built by Asp-152 and Lys-158. Lys-167 is an NAD(+) binding site. Asn-168 lines the 7-phospho-2-dehydro-3-deoxy-D-arabino-heptonate pocket. Residues 185–188 (YLET) and Asn-196 contribute to the NAD(+) site. Glu-200 is a binding site for Zn(2+). Residues 200–203 (EVVK) and Lys-260 each bind 7-phospho-2-dehydro-3-deoxy-D-arabino-heptonate. Glu-270 acts as the Proton acceptor; for 3-dehydroquinate synthase activity in catalysis. 7-phospho-2-dehydro-3-deoxy-D-arabino-heptonate contacts are provided by residues 274–278 (RNLVN) and His-281. His-281 is a Zn(2+) binding site. His-285 serves as the catalytic Proton acceptor; for 3-dehydroquinate synthase activity. 7-phospho-2-dehydro-3-deoxy-D-arabino-heptonate-binding residues include His-297 and Lys-366. Residue His-297 coordinates Zn(2+). An EPSP synthase region spans residues 407 to 858 (VVPSIPTGNV…WDDLENKIGI (452 aa)). Cys-840 functions as the For EPSP synthase activity in the catalytic mechanism. The segment at 885 to 1113 (NSSILLIGMR…GQQRRTYFLC (229 aa)) is shikimate kinase. ATP is bound at residue 892–899 (GMRGTGKT). Residues 1114 to 1341 (LTYPDVRHAF…AAPGQLSFKQ (228 aa)) form a 3-dehydroquinase region. Residue His-1243 is the Proton acceptor; for 3-dehydroquinate dehydratase activity of the active site. Lys-1271 acts as the Schiff-base intermediate with substrate; for 3-dehydroquinate dehydratase activity in catalysis. Residues 1354–1677 (SKHFHLFGTP…TRVWEKYGEV (324 aa)) are shikimate dehydrogenase.

The protein in the N-terminal section; belongs to the sugar phosphate cyclases superfamily. Dehydroquinate synthase family. It in the 2nd section; belongs to the EPSP synthase family. In the 3rd section; belongs to the shikimate kinase family. This sequence in the 4th section; belongs to the type-I 3-dehydroquinase family. The protein in the C-terminal section; belongs to the shikimate dehydrogenase family. In terms of assembly, homodimer. The cofactor is Zn(2+).

Its subcellular location is the cytoplasm. The catalysed reaction is 7-phospho-2-dehydro-3-deoxy-D-arabino-heptonate = 3-dehydroquinate + phosphate. It catalyses the reaction 3-dehydroquinate = 3-dehydroshikimate + H2O. The enzyme catalyses shikimate + NADP(+) = 3-dehydroshikimate + NADPH + H(+). It carries out the reaction shikimate + ATP = 3-phosphoshikimate + ADP + H(+). The catalysed reaction is 3-phosphoshikimate + phosphoenolpyruvate = 5-O-(1-carboxyvinyl)-3-phosphoshikimate + phosphate. Its pathway is metabolic intermediate biosynthesis; chorismate biosynthesis; chorismate from D-erythrose 4-phosphate and phosphoenolpyruvate: step 2/7. It participates in metabolic intermediate biosynthesis; chorismate biosynthesis; chorismate from D-erythrose 4-phosphate and phosphoenolpyruvate: step 3/7. It functions in the pathway metabolic intermediate biosynthesis; chorismate biosynthesis; chorismate from D-erythrose 4-phosphate and phosphoenolpyruvate: step 4/7. The protein operates within metabolic intermediate biosynthesis; chorismate biosynthesis; chorismate from D-erythrose 4-phosphate and phosphoenolpyruvate: step 5/7. Its pathway is metabolic intermediate biosynthesis; chorismate biosynthesis; chorismate from D-erythrose 4-phosphate and phosphoenolpyruvate: step 6/7. Functionally, the AROM polypeptide catalyzes 5 consecutive enzymatic reactions in prechorismate polyaromatic amino acid biosynthesis. The sequence is that of Pentafunctional AROM polypeptide from Coprinopsis cinerea (strain Okayama-7 / 130 / ATCC MYA-4618 / FGSC 9003) (Inky cap fungus).